The following is a 722-amino-acid chain: Pentatricopeptide repeat-containing protein At4g14820 (722 aa).

13 PPR repeats span residues 75–109 (ESIV…GGRL), 110–140 (DQFS…AFKI), 145–175 (DPFV…MSHR), 176–210 (DVVT…NVMP), 211–245 (DEMI…DVRM), 246–276 (DTHL…MSVR), 277–307 (NLFV…TEKK), 308–342 (DLVC…GIKP), 343–377 (DVVS…GLES), 378–408 (ELSI…MPRR), 409–443 (NVVS…NVEP), 444–479 (NEVT…NITP), and 480–514 (KLEH…SNVV). The tract at residues 515–590 (IWGSLMSACR…EKGLSRIDQN (76 aa)) is type E motif. The segment at 591–621 (GKSHEFLIGDKRHKQSNEIYAKLDEVVSKLK) is type E(+) motif. Residues 622-722 (LAGYVPDCGS…NGLCSCRDYW (101 aa)) are type DYW motif.

Belongs to the PPR family. PCMP-H subfamily.

This is Pentatricopeptide repeat-containing protein At4g14820 (PCMP-H3) from Arabidopsis thaliana (Mouse-ear cress).